A 92-amino-acid chain; its full sequence is Small ribosomal subunit protein uS19 (92 aa).

Belongs to the universal ribosomal protein uS19 family.

In terms of biological role, protein S19 forms a complex with S13 that binds strongly to the 16S ribosomal RNA. The polypeptide is Small ribosomal subunit protein uS19 (Buchnera aphidicola subsp. Acyrthosiphon pisum (strain 5A)).